Reading from the N-terminus, the 428-residue chain is UPF0229 protein YeaH (428 aa).

The span at 78–90 (GNDHFIQNDRIER) shows a compositional bias: basic and acidic residues. The segment at 78-111 (GNDHFIQNDRIERPQGGGGGGSGSGQGQASQDGE) is disordered. Gly residues predominate over residues 92 to 103 (QGGGGGGSGSGQ).

It belongs to the UPF0229 family.

The protein is UPF0229 protein YeaH of Salmonella heidelberg (strain SL476).